A 90-amino-acid chain; its full sequence is MNSKLSLPGKNLKMQKRRWKPTRMMLTRAHYRVDGQLCQHWRTNWQTSRGSLQIWCQVKKWVKSLLTRLGLSRMITSRRDQAFDMEMSLM.

Residues 4–29 (KLSLPGKNLKMQKRRWKPTRMMLTRA) form a nucleolar signal region.

The protein belongs to the hantavirus NS-S protein family. As to quaternary structure, interacts with host MAVS; this interaction may reduce MAVS ubiquitination.

Its subcellular location is the host cytoplasm. The protein resides in the host perinuclear region. The protein localises to the host nucleus. Functionally, antagonizes host type-I IFN signaling pathway. The protein is Non-structural protein NS-S (N) of Homo sapiens (Human).